The chain runs to 347 residues: Homeobox protein knotted-1-like 9 (347 aa).

Residues 1–17 (MESFASLAGGGSSSTTA) show a composition bias toward low complexity. Disordered stretches follow at residues 1–36 (MESF…PPPL), 122–145 (QQLD…DVPD), and 179–206 (DSNC…DPSD). Positions 22–36 (LIPPENPDRISPPPL) are enriched in pro residues. The span at 188-203 (SEEEQDTSCPEAEEID) shows a compositional bias: acidic residues. One can recognise an ELK domain in the interval 208-228 (QLKHQLLMKYGGSLGDLRQAF). The homeobox; TALE-type DNA-binding region spans 229–293 (SKRTKKGKLP…NQRKRHWKPT (65 aa)).

The protein belongs to the TALE/KNOX homeobox family.

Its subcellular location is the nucleus. The chain is Homeobox protein knotted-1-like 9 from Oryza sativa subsp. japonica (Rice).